The sequence spans 124 residues: Small ribosomal subunit protein uS12 (124 aa).

Residues 1–22 form a disordered region; sequence MATVNQLVRKPRKRKVAKSDVP. A 3-methylthioaspartic acid modification is found at D89. A disordered region spans residues 99-124; that stretch reads RGSLDTSGVQNRKQGRSKYGTKRPKK. Over residues 111–124 the composition is skewed to basic residues; the sequence is KQGRSKYGTKRPKK.

Belongs to the universal ribosomal protein uS12 family. Part of the 30S ribosomal subunit. Contacts proteins S8 and S17. May interact with IF1 in the 30S initiation complex.

With S4 and S5 plays an important role in translational accuracy. In terms of biological role, interacts with and stabilizes bases of the 16S rRNA that are involved in tRNA selection in the A site and with the mRNA backbone. Located at the interface of the 30S and 50S subunits, it traverses the body of the 30S subunit contacting proteins on the other side and probably holding the rRNA structure together. The combined cluster of proteins S8, S12 and S17 appears to hold together the shoulder and platform of the 30S subunit. In Marinomonas sp. (strain MWYL1), this protein is Small ribosomal subunit protein uS12.